We begin with the raw amino-acid sequence, 212 residues long: ATP-dependent Clp protease proteolytic subunit (212 aa).

The Nucleophile role is filled by Ser-113. Residue His-138 is part of the active site.

The protein belongs to the peptidase S14 family. In terms of assembly, fourteen ClpP subunits assemble into 2 heptameric rings which stack back to back to give a disk-like structure with a central cavity, resembling the structure of eukaryotic proteasomes.

It localises to the cytoplasm. The catalysed reaction is Hydrolysis of proteins to small peptides in the presence of ATP and magnesium. alpha-casein is the usual test substrate. In the absence of ATP, only oligopeptides shorter than five residues are hydrolyzed (such as succinyl-Leu-Tyr-|-NHMec, and Leu-Tyr-Leu-|-Tyr-Trp, in which cleavage of the -Tyr-|-Leu- and -Tyr-|-Trp bonds also occurs).. Its function is as follows. Cleaves peptides in various proteins in a process that requires ATP hydrolysis. Has a chymotrypsin-like activity. Plays a major role in the degradation of misfolded proteins. In Saccharophagus degradans (strain 2-40 / ATCC 43961 / DSM 17024), this protein is ATP-dependent Clp protease proteolytic subunit.